Consider the following 244-residue polypeptide: Adiponectin (244 aa).

Positions 1–18 are cleaved as a signal peptide; it reads MLLLGAVLLLLALPGHDQ. Residues threonine 21 and threonine 22 are each glycosylated (O-linked (GalNAc...) threonine). Lysine 33 carries the post-translational modification 5-hydroxylysine. At cysteine 36 the chain carries S-(2-succinyl)cysteine. The segment at 40–101 is disordered; sequence MAGIPGHPGH…RGFPGIQGRK (62 aa). The 66-residue stretch at 42-107 folds into the Collagen-like domain; the sequence is GIPGHPGHNG…QGRKGEPGEG (66 aa). 4-hydroxyproline occurs at positions 44, 47, and 53. Over residues 55–70 the composition is skewed to basic and acidic residues; it reads RDGRDGTPGEKGEKGD. A 5-hydroxylysine mark is found at lysine 65 and lysine 68. 2 O-linked (Gal...) hydroxylysine; partial glycosylation sites follow: lysine 65 and lysine 68. 4-hydroxyproline; partial is present on residues proline 71 and proline 76. At lysine 77 the chain carries 5-hydroxylysine. Residue lysine 77 is glycosylated (O-linked (Gal...) hydroxylysine; partial). Proline 91 is subject to 4-hydroxyproline. Residue proline 95 is modified to 4-hydroxyproline; partial. Lysine 101 carries the post-translational modification 5-hydroxylysine. O-linked (Gal...) hydroxylysine; partial glycosylation is present at lysine 101. The region spanning 108 to 244 is the C1q domain; that stretch reads AYVYRSAFSV…TGFLLYHDTN (137 aa).

As to quaternary structure, homomultimer. Forms trimers, hexamers and 12- to 18-mers. The trimers (low molecular weight complexes / LMW) are assembled via non-covalent interactions of the collagen-like domains in a triple helix and hydrophobic interactions within the globular C1q domain. Several trimers can associate to form disulfide-linked hexamers (middle molecular weight complexes / MMW) and larger complexes (higher molecular weight / HMW). The HMW-complex assembly is also modulated by the degree of lysine hydroxylation and glycosylation. LMW, MMW and HMW complexes bind to HBEGF, MMW and HMW complexes bind to PDGFB, and HMW complex binds to FGF2. Interacts with CTRP9 via the C1q domain (heterotrimeric complex). Post-translationally, HMW complexes are more extensively glycosylated than smaller oligomers. Hydroxylation and glycosylation of the lysine residues within the collagen-like domain of adiponectin seem to be critically involved in regulating the formation and/or secretion of HMW complexes and consequently contribute to the insulin-sensitizing activity of adiponectin in hepatocytes. O-glycosylated. Not N-glycosylated. O-linked glycans on hydroxylysines consist of Glc-Gal disaccharides bound to the oxygen atom of post-translationally added hydroxyl groups. Sialylated to varying degrees depending on tissue. Thr-22 appears to be the major site of sialylation. Higher sialylation found in SGBS adipocytes than in HEK fibroblasts. Sialylation is not required neither for heterodimerization nor for secretion. Not sialylated on the glycosylated hydroxylysines. Desialylated forms are rapidly cleared from the circulation. In terms of processing, succination of Cys-36 by the Krebs cycle intermediate fumarate, which leads to S-(2-succinyl)cysteine residues, inhibits polymerization and secretion of adiponectin. Adiponectin is a major target for succination in both adipocytes and adipose tissue of diabetic mammals. It was proposed that succination of proteins is a biomarker of mitochondrial stress and accumulation of Krebs cycle intermediates in adipose tissue in diabetes and that succination of adiponectin may contribute to the decrease in plasma adiponectin in diabetes. In terms of tissue distribution, synthesized exclusively by adipocytes and secreted into plasma.

The protein localises to the secreted. Polymerization and secretion of adiponectin is inhibited by succination of cysteine residues by the Krebs cycle intermediate fumarate, which leads to S-(2-succinyl)cysteine residues. In terms of biological role, important adipokine involved in the control of fat metabolism and insulin sensitivity, with direct anti-diabetic, anti-atherogenic and anti-inflammatory activities. Stimulates AMPK phosphorylation and activation in the liver and the skeletal muscle, enhancing glucose utilization and fatty-acid combustion. Antagonizes TNF-alpha by negatively regulating its expression in various tissues such as liver and macrophages, and also by counteracting its effects. Inhibits endothelial NF-kappa-B signaling through a cAMP-dependent pathway. May play a role in cell growth, angiogenesis and tissue remodeling by binding and sequestering various growth factors with distinct binding affinities, depending on the type of complex, LMW, MMW or HMW. The chain is Adiponectin (ADIPOQ) from Homo sapiens (Human).